Here is a 144-residue protein sequence, read N- to C-terminus: Large ribosomal subunit protein uL15 (144 aa).

Residues M1–G53 form a disordered region. Gly residues predominate over residues R21–G31.

It belongs to the universal ribosomal protein uL15 family. In terms of assembly, part of the 50S ribosomal subunit.

Its function is as follows. Binds to the 23S rRNA. The chain is Large ribosomal subunit protein uL15 from Glaesserella parasuis serovar 5 (strain SH0165) (Haemophilus parasuis).